The chain runs to 1020 residues: Valine--tRNA ligase (1020 aa).

The 'HIGH' region motif lies at 45 to 55 (PNVTGALHVGH). Residues 661-665 (KMSKT) carry the 'KMSKS' region motif. K664 contributes to the ATP binding site. Positions 955 to 1020 (AEKDRLEKAK…EALARLAELG (66 aa)) form a coiled coil.

The protein belongs to the class-I aminoacyl-tRNA synthetase family. ValS type 1 subfamily. In terms of assembly, monomer.

It localises to the cytoplasm. The catalysed reaction is tRNA(Val) + L-valine + ATP = L-valyl-tRNA(Val) + AMP + diphosphate. Functionally, catalyzes the attachment of valine to tRNA(Val). As ValRS can inadvertently accommodate and process structurally similar amino acids such as threonine, to avoid such errors, it has a 'posttransfer' editing activity that hydrolyzes mischarged Thr-tRNA(Val) in a tRNA-dependent manner. The sequence is that of Valine--tRNA ligase from Ruegeria pomeroyi (strain ATCC 700808 / DSM 15171 / DSS-3) (Silicibacter pomeroyi).